An 829-amino-acid polypeptide reads, in one-letter code: Cap-specific mRNA (nucleoside-2'-O-)-methyltransferase 1 (829 aa).

The disordered stretch occupies residues 1-68; sequence MKRAAQASDE…DSQNSQGSMA (68 aa). The short motif at 2–16 is the Bipartite nuclear localization signal element; the sequence is KRAAQASDEPLKKRK. A compositionally biased stretch (low complexity) spans 31–44; that stretch reads QRTTSQDSSQSESL. The span at 55 to 68 shows a compositional bias: polar residues; sequence SRPSDSQNSQGSMA. Residues 79-125 enclose the G-patch domain; that stretch reads YNNVSQKLMAKMGFREGEGLGKYGQGRKEIVEASTQRGRRGLGLMLK. Substrate-binding positions include 195–199 and arginine 210; that span reads KTVFD. The RrmJ-type SAM-dependent 2'-O-MTase domain maps to 223–442; the sequence is FFLNRAAMKM…ERYVVCKGLK (220 aa). Asparagine 226 is a binding site for S-adenosyl-L-methionine. The active site involves lysine 231. Residues 269–275 and 327–328 each bind S-adenosyl-L-methionine; these read CAGPGGF and DI. The active site involves aspartate 356. Residue 366–368 participates in substrate binding; that stretch reads NLQ. Lysine 396 serves as the catalytic Proton acceptor. Asparagine 431 is a binding site for substrate. Residues 745 to 779 enclose the WW domain; it reads KTVNDPWTMAFSKSSKRKFFYNKQTKESTYDLPAT.

It is found in the nucleus. It catalyses the reaction a 5'-end (N(7)-methyl 5'-triphosphoguanosine)-ribonucleoside in mRNA + S-adenosyl-L-methionine = a 5'-end (N(7)-methyl 5'-triphosphoguanosine)-(2'-O-methyl-ribonucleoside) in mRNA + S-adenosyl-L-homocysteine + H(+). In terms of biological role, S-adenosyl-L-methionine-dependent methyltransferase that mediates mRNA cap1 2'-O-ribose methylation to the 5'-cap structure of mRNAs. Methylates the ribose of the first nucleotide of a m(7)GpppG-capped mRNA and small nuclear RNA (snRNA) to produce m(7)GpppRm (cap1). Displays a preference for cap0 transcripts. Cap1 modification is linked to higher levels of translation. May be involved in the interferon response pathway. The sequence is that of Cap-specific mRNA (nucleoside-2'-O-)-methyltransferase 1 (cmtr1) from Danio rerio (Zebrafish).